The following is a 233-amino-acid chain: Movement and silencing protein TGBp1 (233 aa).

A (+)RNA virus helicase ATP-binding domain is found at 1–133; sequence MNHFINLLVA…CKLLSSLGIK (133 aa). Positions 134 to 233 constitute a (+)RNA virus helicase C-terminal domain; that stretch reads VESHRRDRDV…EFPHTTSRPQ (100 aa).

It belongs to the Tymovirales TGBp1 protein family. Homodimer and homooligomer. Interacts with capsid protein. Interacts with host AGO1; this interaction targets the host protein for degradation, thereby suppressing the antiviral RNA silencing.

It is found in the host cytoplasm. Transports viral genome to neighboring plant cells directly through plasmosdesmata, without any budding. The movement protein allows efficient cell to cell propagation, by bypassing the host cell wall barrier. Increases plasmodesma size exclusion limit. Acts as a suppressor of RNA-mediated gene silencing, also known as post-transcriptional gene silencing (PTGS), a mechanism of plant viral defense that limits the accumulation of viral RNAs. This is Movement and silencing protein TGBp1 from Carica papaya (Papaya).